The sequence spans 538 residues: Syncytin-1 (538 aa).

A signal peptide spans 1 to 20; that stretch reads MALPYHIFLFTVLLPSFTLT. The Extracellular portion of the chain corresponds to 21–443; that stretch reads APPPCRCMTS…NIGPWGLFSQ (423 aa). N-linked (GlcNAc...) asparagine glycosylation occurs at asparagine 169. The short motif at 186 to 189 is the CXXC element; sequence CWMC. 3 disulfides stabilise this stretch: cysteine 186-cysteine 189, cysteine 186-cysteine 405, and cysteine 397-cysteine 404. N-linked (GlcNAc...) asparagine glycosylation is found at asparagine 208, asparagine 214, asparagine 234, asparagine 242, asparagine 245, and asparagine 281. The fusion peptide stretch occupies residues 320–340; sequence ILPFVMAAGVLGALGTGIGGI. An immunosuppression region spans residues 380 to 396; sequence LQNRRALDLLTAERGGT. Positions 397 to 405 match the CX6CC motif; the sequence is CLFLGEECC. A glycan (N-linked (GlcNAc...) asparagine) is linked at asparagine 409. A helical transmembrane segment spans residues 444 to 464; sequence WMPWILPFLGPLAAIILLLLF. Residues 465 to 484 are essential for the fusiogenic function; sequence GPCIFNLLVNFVSSRIEAVK. Topologically, residues 465–538 are cytoplasmic; sequence GPCIFNLLVN…LLRPNSAGSS (74 aa). The disordered stretch occupies residues 501-538; it reads PLDWPASPRSDVNDIKGTPPEEISTAQPLLRPNSAGSS.

Belongs to the gamma type-C retroviral envelope protein family. HERV class-I W env subfamily. The mature envelope protein (Env) consists of a trimer of SU-TM heterodimers attached probably by a labile interchain disulfide bond. Interacts with the C-type lectin CD209/DC-SIGN. Post-translationally, specific enzymatic cleavages in vivo yield mature proteins. Envelope glycoproteins are synthesized as an inactive precursor that is heavily N-glycosylated and processed likely by furin in the Golgi to yield the mature SU and TM proteins. The cleavage site between SU and TM requires the minimal sequence [KR]-X-[KR]-R. In terms of processing, the CXXC motif is highly conserved across a broad range of retroviral envelope proteins. It is thought to participate in the formation of a labile disulfide bond possibly with the CX6CC motif present in the transmembrane protein.

The protein resides in the cell membrane. The protein localises to the virion. Functionally, this endogenous retroviral envelope protein has retained its original fusogenic properties and participates in trophoblast fusion and the formation of a syncytium during placenta morphogenesis. May recognize and induce fusion through binding of SLC1A4 and SLC1A5. Its function is as follows. Endogenous envelope proteins may have kept, lost or modified their original function during evolution. Retroviral envelope proteins mediate receptor recognition and membrane fusion during early infection. The surface protein (SU) mediates receptor recognition, while the transmembrane protein (TM) acts as a class I viral fusion protein. The protein may have at least 3 conformational states: pre-fusion native state, pre-hairpin intermediate state, and post-fusion hairpin state. During viral and target cell membrane fusion, the coiled coil regions (heptad repeats) assume a trimer-of-hairpins structure, positioning the fusion peptide in close proximity to the C-terminal region of the ectodomain. The formation of this structure appears to drive apposition and subsequent fusion of membranes. The polypeptide is Syncytin-1 (ERVW-1) (Pongo pygmaeus (Bornean orangutan)).